The following is a 328-amino-acid chain: Putative thiosulfate sulfurtransferase mpst-1 (328 aa).

2 consecutive Rhodanese domains span residues 22–162 (NKEG…EVST) and 202–320 (KTSE…KKIS). Cys-278 functions as the Cysteine persulfide intermediate in the catalytic mechanism.

The catalysed reaction is thiosulfate + hydrogen cyanide = thiocyanate + sulfite + 2 H(+). The sequence is that of Putative thiosulfate sulfurtransferase mpst-1 (mpst-1) from Caenorhabditis elegans.